The following is a 433-amino-acid chain: Ornithine decarboxylase, chloroplastic (433 aa).

K96 carries the N6-(pyridoxal phosphate)lysine modification. Residues S228, G266, and 299 to 302 (EPGR) each bind pyridoxal 5'-phosphate. 342–343 (YD) serves as a coordination point for substrate. C378 functions as the Proton donor; shared with dimeric partner in the catalytic mechanism. Substrate is bound at residue D379. Residue Y407 coordinates pyridoxal 5'-phosphate.

It belongs to the Orn/Lys/Arg decarboxylase class-II family. Homodimer. Only the dimer is catalytically active, as the active sites are constructed of residues from both monomers. The cofactor is pyridoxal 5'-phosphate.

The protein localises to the plastid. The protein resides in the chloroplast. The enzyme catalyses L-ornithine + H(+) = putrescine + CO2. Its pathway is alkaloid biosynthesis; nicotine biosynthesis. It functions in the pathway amine and polyamine biosynthesis; putrescine biosynthesis via L-ornithine pathway; putrescine from L-ornithine: step 1/1. Functionally, involved in the biosynthesis of pyridine alkaloid natural products, leading mainly to the production of anabasine, anatabine, nicotine and nornicotine, effective deterrents against herbivores with antiparasitic and pesticide properties (neurotoxins); nornicotine serves as the precursor in the synthesis of the carcinogen compound N'-nitrosonornicotine (NNN). Catalyzes the first and rate-limiting step of polyamine biosynthesis that converts ornithine into putrescine, which is the precursor for the polyamines, spermidine and spermine. Polyamines are essential for cell proliferation and are implicated in cellular processes, ranging from DNA replication to apoptosis. This chain is Ornithine decarboxylase, chloroplastic, found in Nicotiana glauca (Glaucous tobacco).